Reading from the N-terminus, the 350-residue chain is Dihydroorotate dehydrogenase (quinone) (350 aa).

Residues 65–69 (AGLDK) and T89 each bind FMN. K69 is a substrate binding site. 114 to 118 (NRLGF) contacts substrate. Residues N149 and N182 each contribute to the FMN site. Substrate is bound at residue N182. S185 acts as the Nucleophile in catalysis. N187 is a binding site for substrate. 2 residues coordinate FMN: K227 and T255. Position 256–257 (256–257 (NT)) interacts with substrate. FMN-binding positions include G278, G307, and 328–329 (YT).

This sequence belongs to the dihydroorotate dehydrogenase family. Type 2 subfamily. Monomer. It depends on FMN as a cofactor.

Its subcellular location is the cell membrane. The catalysed reaction is (S)-dihydroorotate + a quinone = orotate + a quinol. The protein operates within pyrimidine metabolism; UMP biosynthesis via de novo pathway; orotate from (S)-dihydroorotate (quinone route): step 1/1. Its function is as follows. Catalyzes the conversion of dihydroorotate to orotate with quinone as electron acceptor. The protein is Dihydroorotate dehydrogenase (quinone) of Polaromonas naphthalenivorans (strain CJ2).